The chain runs to 506 residues: Pyruvate kinase 2 (506 aa).

S24 carries the post-translational modification Phosphoserine. Residue R51 coordinates substrate. 4 residues coordinate K(+): N53, S55, D86, and T87. An ATP-binding site is contributed by 53-56 (NFSH). Residues R93 and K179 each contribute to the ATP site. E244 contacts Mg(2+). The substrate site is built by G267, D268, and T300. A Mg(2+)-binding site is contributed by D268.

This sequence belongs to the pyruvate kinase family. Homotetramer. Mg(2+) is required as a cofactor. It depends on K(+) as a cofactor.

It carries out the reaction pyruvate + ATP = phosphoenolpyruvate + ADP + H(+). It participates in carbohydrate degradation; glycolysis; pyruvate from D-glyceraldehyde 3-phosphate: step 5/5. Its activity is regulated as follows. Not activated by fructose-1,6-bisphosphate. May be used by cells under conditions in which the level of glycolytic flux is very low. This is Pyruvate kinase 2 (PYK2) from Saccharomyces cerevisiae (strain ATCC 204508 / S288c) (Baker's yeast).